Here is an 87-residue protein sequence, read N- to C-terminus: Beta-toxin Cn4 (87 aa).

A signal peptide spans 1 to 19 (MNSLLMITACLALVGTVWA). An LCN-type CS-alpha/beta domain is found at 20 to 85 (KEGYLVNSYT…VWPLKNKTCN (66 aa)). 4 disulfides stabilise this stretch: Cys31–Cys84, Cys35–Cys60, Cys44–Cys65, and Cys48–Cys67. The residue at position 85 (Asn85) is an Asparagine amide.

The protein belongs to the long (4 C-C) scorpion toxin superfamily. Sodium channel inhibitor family. Beta subfamily. As to expression, expressed by the venom gland.

It localises to the secreted. In terms of biological role, beta toxins bind voltage-independently at site-4 of sodium channels (Nav) and shift the voltage of activation toward more negative potentials thereby affecting sodium channel activation and promoting spontaneous and repetitive firing. This toxin affects the activation mechanism of sodium channels of squid axon. It also competes with Cn2 in rat brain synaptosomes. Is lethal to mice. This is Beta-toxin Cn4 from Centruroides noxius (Mexican scorpion).